The chain runs to 302 residues: Putative S-adenosyl-L-methionine-dependent methyltransferase MAP_1622c (302 aa).

Residues aspartate 129 and aspartate 158 to leucine 159 each bind S-adenosyl-L-methionine.

The protein belongs to the UPF0677 family.

Exhibits S-adenosyl-L-methionine-dependent methyltransferase activity. The protein is Putative S-adenosyl-L-methionine-dependent methyltransferase MAP_1622c of Mycolicibacterium paratuberculosis (strain ATCC BAA-968 / K-10) (Mycobacterium paratuberculosis).